Reading from the N-terminus, the 300-residue chain is Protease HtpX (300 aa).

The next 2 helical transmembrane spans lie at 4–24 and 40–60; these read ILLF…TLRL and SLLI…LFIS. Residue H145 participates in Zn(2+) binding. The active site involves E146. H149 contacts Zn(2+). The next 2 helical transmembrane spans lie at 153–173 and 193–213; these read GDMV…MFFA and LGFF…GLVA. Zn(2+) is bound at residue E225.

The protein belongs to the peptidase M48B family. Zn(2+) is required as a cofactor.

The protein resides in the cell inner membrane. This is Protease HtpX from Chromohalobacter salexigens (strain ATCC BAA-138 / DSM 3043 / CIP 106854 / NCIMB 13768 / 1H11).